The sequence spans 1073 residues: Probable inorganic carbon transporter subunit DabA 2 (1073 aa).

Residues 1-20 (MSSGNTSSQNHSPVNNQPTR) show a composition bias toward polar residues. The tract at residues 1 to 35 (MSSGNTSSQNHSPVNNQPTRLKSPLPALHKDTQPN) is disordered. Residues cysteine 535, aspartate 537, histidine 721, and cysteine 736 each coordinate Zn(2+).

The protein belongs to the inorganic carbon transporter (TC 9.A.2) DabA family. In terms of assembly, forms a complex with DabB. The cofactor is Zn(2+).

The protein localises to the cell inner membrane. In terms of biological role, part of an energy-coupled inorganic carbon pump. This is Probable inorganic carbon transporter subunit DabA 2 from Rhodopirellula baltica (strain DSM 10527 / NCIMB 13988 / SH1).